Consider the following 421-residue polypeptide: UDP-N-acetylglucosamine 1-carboxyvinyltransferase (421 aa).

22–23 (KN) serves as a coordination point for phosphoenolpyruvate. Residue R92 coordinates UDP-N-acetyl-alpha-D-glucosamine. Catalysis depends on D116, which acts as the Proton donor. UDP-N-acetyl-alpha-D-glucosamine-binding positions include 121–125 (RPIDQ), D307, and I330.

This sequence belongs to the EPSP synthase family. MurA subfamily.

Its subcellular location is the cytoplasm. It carries out the reaction phosphoenolpyruvate + UDP-N-acetyl-alpha-D-glucosamine = UDP-N-acetyl-3-O-(1-carboxyvinyl)-alpha-D-glucosamine + phosphate. Its pathway is cell wall biogenesis; peptidoglycan biosynthesis. In terms of biological role, cell wall formation. Adds enolpyruvyl to UDP-N-acetylglucosamine. This is UDP-N-acetylglucosamine 1-carboxyvinyltransferase from Lactobacillus johnsonii (strain CNCM I-12250 / La1 / NCC 533).